Reading from the N-terminus, the 1708-residue chain is Rapamycin-insensitive companion of mTOR (1708 aa).

The interval 1-789 (MAAIGRGRSL…DKANLHALIQ (789 aa)) is interaction with NBN. Phosphoserine occurs at positions 21, 35, and 265. Residue Lys274 forms a Glycyl lysine isopeptide (Lys-Gly) (interchain with G-Cter in ubiquitin) linkage. The ribosome-binding domain stretch occupies residues 521–570 (LKDTEEALLINLRDSQVLQHKENLDWDWNLIGTILKWPNVNLRNYKDEQL). 3 residues coordinate ATP: Asn543, Arg572, and Arg576. The span at 1021–1043 (TLSLNSESTSSRHNSESESAPSS) shows a compositional bias: low complexity. The disordered stretch occupies residues 1021-1045 (TLSLNSESTSSRHNSESESAPSSMF). N6-acetyllysine is present on residues Lys1092 and Lys1095. 2 disordered regions span residues 1101-1198 (SLTL…ENTS) and 1218-1247 (SFNT…PTAM). Position 1103 is a phosphothreonine (Thr1103). An N6-acetyllysine mark is found at Lys1116, Lys1119, and Lys1125. Thr1135 is subject to Phosphothreonine; by RPS6KB1. Ser1138 carries the post-translational modification Phosphoserine. Residues 1147 to 1158 (FTSSSAQKSLQL) show a composition bias toward polar residues. Ser1161, Ser1218, and Ser1234 each carry phosphoserine. The span at 1221–1239 (TDTTTSGISSMSSSPSRET) shows a compositional bias: low complexity. Thr1270 carries the post-translational modification Phosphothreonine. Phosphoserine is present on residues Ser1273, Ser1277, Ser1281, and Ser1283. At Thr1294 the chain carries Phosphothreonine. A phosphoserine mark is found at Ser1301 and Ser1312. Thr1331 is modified (phosphothreonine). Phosphoserine occurs at positions 1345 and 1352. A Phosphothreonine modification is found at Thr1375. Ser1384 bears the Phosphoserine mark. Position 1385 is a phosphotyrosine (Tyr1385). Phosphoserine is present on residues Ser1387, Ser1395, and Ser1410. Zn(2+) contacts are provided by His1514, Cys1519, and Cys1522. Residues Ser1570, Ser1573, Ser1576, and Ser1591 each carry the phosphoserine modification. Zn(2+) is bound at residue Cys1651.

The protein belongs to the RICTOR family. As to quaternary structure, component of the mechanistic target of rapamycin complex 2 (mTORC2), consisting in two heterotretramers composed of MTOR, MLST8, RICTOR and MAPKAP1/SIN1. The mTORC2 core complex associates with PRR5/PROTOR1 and/or PRR5L/PROTOR2. Contrary to mTORC1, mTORC2 does not bind to and is not sensitive to FKBP12-rapamycin. Binds directly to MTOR and PRR5 within the TORC2 complex; interaction with MTOR is enhanced by deubiquitination of RICTOR by USP9X. Interaction with MAPKAP1 is not enhanced by RICTOR deubiquitination by USP9X. Interacts with CCDC28B. Interacts with NBN. Interacts with SIK3. Interacts with NCKAP1L. Interacts with ARMH4 (via cytoplasmic tail); this interaction bridges ARMH4 to the mTORC2 complex and inhibits the mTORC2 kinase activity. Interacts with UBXN2A. Interacts with TSPAN8. Phosphorylated by MTOR; when part of mTORC2. Phosphorylated at Thr-1135 by RPS6KB1 downstream of the mTORC1 complex: phosphorylation of RICTOR inhibits mTORC2 signaling by creating a binding site for 14-3-3 proteins. Phosphorylated at Ser-1234 by GSK3B in response to endoplasmic stress, inhibiting mTORC2 signaling. In terms of processing, ubiquitinated by the SCF(FBXW7) complex, leading to its degradation by the proteasome. Deubiquitinated by USP9X; deubiquitination stabilizes RICTOR and enhances its binding to MTOR, thus promoting mTORC2 complex assembly. Post-translationally, acetylated by EP300/p300 in response to glucose, leading to activate the mTORC2 complex. Acetylation by BLOC1S1/GCN5L1 in response to hypotoxic stress protects RICTOR against ubiquitination and subsequent degradation by the proteasome. In terms of tissue distribution, highest levels in liver and brain with expression also detected in heart, muscle, spleen and kidney (at protein level).

The protein resides in the cell membrane. The protein localises to the endoplasmic reticulum membrane. Its subcellular location is the lysosome membrane. In terms of biological role, component of the mechanistic target of rapamycin complex 2 (mTORC2), which transduces signals from growth factors to pathways involved in proliferation, cytoskeletal organization, lipogenesis and anabolic output. In response to growth factors, mTORC2 phosphorylates and activates AGC protein kinase family members, including AKT (AKT1, AKT2 and AKT3), PKC (PRKCA, PRKCB and PRKCE) and SGK1. In contrast to mTORC1, mTORC2 is nutrient-insensitive. Within the mTORC2 complex, RICTOR probably acts as a molecular adapter. RICTOR is responsible for the FKBP12-rapamycin-insensitivity of mTORC2. mTORC2 plays a critical role in AKT1 activation by mediating phosphorylation of different sites depending on the context, such as 'Thr-450', 'Ser-473', 'Ser-477' or 'Thr-479', facilitating the phosphorylation of the activation loop of AKT1 on 'Thr-308' by PDPK1/PDK1 which is a prerequisite for full activation. mTORC2 catalyzes the phosphorylation of SGK1 at 'Ser-422' and of PRKCA on 'Ser-657'. The mTORC2 complex also phosphorylates various proteins involved in insulin signaling, such as FBXW8 and IGF2BP1. mTORC2 acts upstream of Rho GTPases to regulate the actin cytoskeleton, probably by activating one or more Rho-type guanine nucleotide exchange factors. mTORC2 promotes the serum-induced formation of stress-fibers or F-actin. Plays an essential role in embryonic growth and development. The chain is Rapamycin-insensitive companion of mTOR from Mus musculus (Mouse).